The primary structure comprises 693 residues: Polyribonucleotide nucleotidyltransferase (693 aa).

Mg(2+) contacts are provided by D489 and D495. One can recognise a KH domain in the interval 556–615 (PQIHVMNINPAKIKDVVGRGGATVKGIVEKTGAQIDTSDSGEVKVFAKDKKSMDMAVAMI). The S1 motif domain maps to 625-693 (GQVYKGKIVK…GRVKLSLVAR (69 aa)).

The protein belongs to the polyribonucleotide nucleotidyltransferase family. As to quaternary structure, component of the RNA degradosome, which is a multiprotein complex involved in RNA processing and mRNA degradation. It depends on Mg(2+) as a cofactor.

The protein localises to the cytoplasm. The catalysed reaction is RNA(n+1) + phosphate = RNA(n) + a ribonucleoside 5'-diphosphate. Functionally, involved in mRNA degradation. Catalyzes the phosphorolysis of single-stranded polyribonucleotides processively in the 3'- to 5'-direction. The protein is Polyribonucleotide nucleotidyltransferase of Francisella tularensis subsp. novicida (strain U112).